Consider the following 217-residue polypeptide: Large ribosomal subunit protein uL3 (217 aa).

The interval 129-161 (SRGPMSHGSKNHRAPGSTGAGTTPGRIYPGKRM) is disordered. Residues 142-153 (APGSTGAGTTPG) show a composition bias toward low complexity.

The protein belongs to the universal ribosomal protein uL3 family. In terms of assembly, part of the 50S ribosomal subunit. Forms a cluster with proteins L14 and L19.

In terms of biological role, one of the primary rRNA binding proteins, it binds directly near the 3'-end of the 23S rRNA, where it nucleates assembly of the 50S subunit. In Prochlorococcus marinus subsp. pastoris (strain CCMP1986 / NIES-2087 / MED4), this protein is Large ribosomal subunit protein uL3.